The primary structure comprises 319 residues: ATP-dependent 6-phosphofructokinase (319 aa).

Residue Gly11 participates in ATP binding. Residue 21–25 (RAVVR) participates in ADP binding. ATP-binding positions include 72-73 (RC) and 102-105 (GDGS). Residue Asp103 participates in Mg(2+) binding. 125 to 127 (TID) is a substrate binding site. Catalysis depends on Asp127, which acts as the Proton acceptor. Arg154 is a binding site for ADP. Substrate-binding positions include Arg162 and 169-171 (MGR). ADP-binding positions include 185-187 (GAE), Arg211, and 213-215 (KLH). Substrate is bound by residues Glu222, Arg243, and 249-252 (HLQR).

This sequence belongs to the phosphofructokinase type A (PFKA) family. ATP-dependent PFK group I subfamily. Prokaryotic clade 'B1' sub-subfamily. Homotetramer. It depends on Mg(2+) as a cofactor.

Its subcellular location is the cytoplasm. The enzyme catalyses beta-D-fructose 6-phosphate + ATP = beta-D-fructose 1,6-bisphosphate + ADP + H(+). It functions in the pathway carbohydrate degradation; glycolysis; D-glyceraldehyde 3-phosphate and glycerone phosphate from D-glucose: step 3/4. Its activity is regulated as follows. Allosterically activated by ADP and other diphosphonucleosides, and allosterically inhibited by phosphoenolpyruvate. In terms of biological role, catalyzes the phosphorylation of D-fructose 6-phosphate to fructose 1,6-bisphosphate by ATP, the first committing step of glycolysis. The protein is ATP-dependent 6-phosphofructokinase of Clostridium novyi (strain NT).